Consider the following 126-residue polypeptide: MADMKWAVAHIKSSFNNTIITVTDITGAETIAKSSGGMVVKAARDESSPYTAMQMAGQLADQLRDKGIHGIHIRVRAPGGNKQRSPGPGAQAAIRAFARAGIRIGRIEDVTPVPHDGTRPKGGRRV.

It belongs to the universal ribosomal protein uS11 family. In terms of assembly, part of the 30S ribosomal subunit.

Located on the platform of the 30S subunit. This is Small ribosomal subunit protein uS11 from Methanosarcina barkeri (strain Fusaro / DSM 804).